The chain runs to 177 residues: Translation initiation factor IF-3 (177 aa).

This sequence belongs to the IF-3 family. Monomer.

It localises to the cytoplasm. Functionally, IF-3 binds to the 30S ribosomal subunit and shifts the equilibrium between 70S ribosomes and their 50S and 30S subunits in favor of the free subunits, thus enhancing the availability of 30S subunits on which protein synthesis initiation begins. In Nostoc punctiforme (strain ATCC 29133 / PCC 73102), this protein is Translation initiation factor IF-3.